The primary structure comprises 296 residues: Non-selective voltage-gated ion channel VDAC2 (296 aa).

Lys25 lines the ATP pocket. Lys25 participates in a covalent cross-link: Glycyl lysine isopeptide (Lys-Gly) (interchain with G-Cter in ubiquitin). Ser26 is modified (phosphoserine). An ATP-binding site is contributed by Lys33. The residue at position 33 (Lys33) is an N6-acetyllysine; alternate. Lys33 is modified (N6-succinyllysine; alternate). Lys33 participates in a covalent cross-link: Glycyl lysine isopeptide (Lys-Gly) (interchain with G-Cter in ubiquitin); alternate. The next 2 membrane-spanning stretches (beta stranded) occupy residues 39-48 (LVKLDVKTKS) and 52-60 (VEFTTSGSS). Residues Lys66 and Lys74 each participate in a glycyl lysine isopeptide (Lys-Gly) (interchain with G-Cter in ubiquitin) cross-link. Residues 67 to 77 (VNGSLETKYKW) form a beta stranded membrane-spanning segment. Tyr80 is modified (phosphotyrosine). Beta stranded transmembrane passes span 82–89 (LTFTEKWN), 93–102 (TLGTEIAIED), and 108–117 (LKLTFDTTFS). The residue at position 120 (Thr120) is a Phosphothreonine. At Lys122 the chain carries N6-acetyllysine; alternate. Residue Lys122 forms a Glycyl lysine isopeptide (Lys-Gly) (interchain with G-Cter in ubiquitin); alternate linkage. Lys123 is covalently cross-linked (Glycyl lysine isopeptide (Lys-Gly) (interchain with G-Cter in ubiquitin)). A run of 4 beta stranded transmembrane segments spans residues 124–133 (SGKIKSAYKR), 136–143 (LNLGCDVD), 150–158 (AIHGSAVFG), and 163–171 (LAGYQMTFD). A Glycyl lysine isopeptide (Lys-Gly) (interchain with G-Cter in ubiquitin) cross-link involves residue Lys174. 6 beta stranded membrane-spanning segments follow: residues 176–188 (KLTR…GYKT), 191–198 (FQLHTNVN), 202–211 (EFGGSIYQKV), 215–224 (LETAVNLAWT), 231–240 (RFGIAAKYKL), and 244–251 (ASISAKVN). Ser206 is modified (phosphoserine). Ser253 carries the post-translational modification Phosphoserine. NAD(+) is bound by residues 255 to 257 (LVG) and 273 to 277 (SALID). Transmembrane regions (beta stranded) follow at residues 255–264 (LVGVGYTQTL) and 267–276 (GVKLTLSALI). An N6-acetyllysine; alternate modification is found at Lys279. A Glycyl lysine isopeptide (Lys-Gly) (interchain with G-Cter in ubiquitin); alternate cross-link involves residue Lys279. Residues 286–295 (HKLGLGLELE) form a beta stranded membrane-spanning segment. A Glycyl lysine isopeptide (Lys-Gly) (interchain with G-Cter in ubiquitin) cross-link involves residue Lys287.

It belongs to the eukaryotic mitochondrial porin family. In terms of assembly, monomer, homodimer and higher order oligomers; formation of higher order structures is necessary for scramblase activity. Post-translationally, ubiquitinated by PRKN during mitophagy, leading to its degradation and enhancement of mitophagy. Deubiquitinated by USP30.

It is found in the mitochondrion outer membrane. Its subcellular location is the membrane. It catalyses the reaction chloride(in) = chloride(out). It carries out the reaction K(+)(in) = K(+)(out). The catalysed reaction is a 1,2-diacyl-sn-glycero-3-phospho-L-serine(in) = a 1,2-diacyl-sn-glycero-3-phospho-L-serine(out). The enzyme catalyses a 1,2-diacyl-sn-glycero-3-phosphocholine(in) = a 1,2-diacyl-sn-glycero-3-phosphocholine(out). It catalyses the reaction a 1,2-diacyl-sn-glycero-3-phospho-(1D-myo-inositol)(in) = a 1,2-diacyl-sn-glycero-3-phospho-(1D-myo-inositol)(out). Its function is as follows. Non-selective voltage-gated ion channel that mediates the transport of anions and cations through the mitochondrion outer membrane and plasma membrane. The channel adopts an open conformation at zero mV and a closed conformation at both positive and negative potentials. There are two populations of channels; the main that functions in a lower open-state conductance with lower ion selectivity, that switch, in a voltage-dependent manner, from the open to a low-conducting 'closed' state and the other that has a normal ion selectivity in the typical high conductance, 'open' state. Binds various lipids, including the sphingolipid ceramide, the phospholipid phosphatidylcholine, and the sterols cholesterol and oxysterol. Binding of ceramide promotes the mitochondrial outer membrane permeabilization (MOMP) apoptotic pathway. Catalyzes the scrambling of phospholipids across the outer mitochondrial membrane; the mechanism is unrelated to channel activity and is capable of translocating both anionic and zwitterionic phospholipids. The protein is Non-selective voltage-gated ion channel VDAC2 of Meleagris gallopavo (Wild turkey).